A 903-amino-acid chain; its full sequence is Valine--tRNA ligase (903 aa).

Residues 1 to 15 (MVCVTDQNNENPSQN) show a composition bias toward polar residues. A disordered region spans residues 1–22 (MVCVTDQNNENPSQNRADKLPK). The 'HIGH' region motif lies at 61-71 (PNVTGQLHMGH). Positions 552 to 556 (KMSKS) match the 'KMSKS' region motif. An ATP-binding site is contributed by lysine 555. Residues 836–902 (TVDVAAERKR…ERITKRLEEL (67 aa)) are a coiled coil.

It belongs to the class-I aminoacyl-tRNA synthetase family. ValS type 1 subfamily. As to quaternary structure, monomer.

It is found in the cytoplasm. It carries out the reaction tRNA(Val) + L-valine + ATP = L-valyl-tRNA(Val) + AMP + diphosphate. Its function is as follows. Catalyzes the attachment of valine to tRNA(Val). As ValRS can inadvertently accommodate and process structurally similar amino acids such as threonine, to avoid such errors, it has a 'posttransfer' editing activity that hydrolyzes mischarged Thr-tRNA(Val) in a tRNA-dependent manner. The protein is Valine--tRNA ligase of Corynebacterium efficiens (strain DSM 44549 / YS-314 / AJ 12310 / JCM 11189 / NBRC 100395).